Consider the following 216-residue polypeptide: Protein Syd (216 aa).

The protein belongs to the Syd family.

It localises to the cell inner membrane. Its function is as follows. Interacts with the SecY protein in vivo. May bind preferentially to an uncomplexed state of SecY, thus functioning either as a chelating agent for excess SecY in the cell or as a regulatory factor that negatively controls the translocase function. The polypeptide is Protein Syd (Shewanella sp. (strain ANA-3)).